The following is a 260-amino-acid chain: 3'-5' ssDNA/RNA exonuclease TatD (260 aa).

The a divalent metal cation site is built by Glu91, His127, and His152.

It belongs to the metallo-dependent hydrolases superfamily. TatD-type hydrolase family. TatD subfamily. As to quaternary structure, monomer. Requires Mg(2+) as cofactor.

It is found in the cytoplasm. Its function is as follows. 3'-5' exonuclease that prefers single-stranded DNA and RNA. May play a role in the H(2)O(2)-induced DNA damage repair. The sequence is that of 3'-5' ssDNA/RNA exonuclease TatD from Enterobacter sp. (strain 638).